A 297-amino-acid polypeptide reads, in one-letter code: Phenylalanine-4-hydroxylase (297 aa).

Positions 138, 143, and 184 each coordinate Fe cation.

This sequence belongs to the biopterin-dependent aromatic amino acid hydroxylase family. As to quaternary structure, monomer. Requires Fe(2+) as cofactor.

The enzyme catalyses (6R)-L-erythro-5,6,7,8-tetrahydrobiopterin + L-phenylalanine + O2 = (4aS,6R)-4a-hydroxy-L-erythro-5,6,7,8-tetrahydrobiopterin + L-tyrosine. It functions in the pathway amino-acid degradation; L-phenylalanine degradation; acetoacetate and fumarate from L-phenylalanine: step 1/6. This chain is Phenylalanine-4-hydroxylase (phhA), found in Chromobacterium violaceum (strain ATCC 12472 / DSM 30191 / JCM 1249 / CCUG 213 / NBRC 12614 / NCIMB 9131 / NCTC 9757 / MK).